The following is a 478-amino-acid chain: Septin-4 (478 aa).

Residues 1 to 115 form a disordered region; it reads MDRSLGWQGN…RSPWGKLDPY (115 aa). Residues 13–26 show a composition bias toward basic and acidic residues; that stretch reads PEDRTEAGIKRFLE. A compositionally biased stretch (low complexity) spans 95–108; it reads APAPLSPSARPRSP. Residues Ser117 and Ser118 each carry the phosphoserine modification. Residues 141–414 enclose the Septin-type G domain; that stretch reads KGFDFTLMVA…ENYRAQCIQS (274 aa). The G1 motif stretch occupies residues 151–158; sequence GESGLGKS. Residues 151–158 and Thr185 each bind GTP; that span reads GESGLGKS. The segment at 208-211 is G3 motif; it reads DTPG. Residues 289–292 form a G4 motif region; it reads AKAD. GTP is bound at residue 290 to 298; it reads KADTLTPPE. Ser325 is subject to Phosphoserine. Gly348 and Arg363 together coordinate GTP. The tract at residues 428–448 is disordered; it reads LTRESGTDFPIPAVPPGTDPE. At Ser432 the chain carries Phosphoserine. Thr434 is subject to Phosphothreonine. Residues 447–478 are a coiled coil; it reads PETEKLIREKDEELRRMQEMLHKIQKQMKENY.

The protein belongs to the TRAFAC class TrmE-Era-EngA-EngB-Septin-like GTPase superfamily. Septin GTPase family. In terms of assembly, septins polymerize into heterooligomeric protein complexes that form filaments, and can associate with cellular membranes, actin filaments and microtubules. GTPase activity is required for filament formation. Interacts with SEPTIN8. In a mesenchymal cell line, interacts with SEPTIN9 isoform 2 variants HNA Trp-106 and Phe-111, but not the wild type SEPTIN9. Component of a septin core octameric complex consisting of SEPTIN12, SEPTIN7, SEPTIN6 and SEPTIN2 or SEPTIN4 in the order 12-7-6-2-2-6-7-12 or 12-7-6-4-4-6-7-12. Interacts with SEPTIN14 (via C-terminus). Interacts with DYRK1A. Interacts with SLC6A3/DAT and SNCA/alpha-synuclein. Interacts with STX1A; in the striatum. Interacts with XIAP (via BIR3 domain) following the induction of apoptosis. Interacts with AREL1 (via HECT domain); in the cytoplasm following induction of apoptosis. Part of a complex composed of SEPTIN4 isoform ARTS, XIAP and BCL2, within the complex interacts with both BCL2 (via BH3 domain) and XIAP, ARTS acts as a scaffold protein and stabilizes the complex. Interacts with XIAP (via BIR3 domain) following the induction of apoptosis. In terms of processing, phosphorylated by DYRK1A. Post-translationally, ubiquitinated by AREL1. As to expression, widely expressed in adult and fetal tissues with highest expression in adult brain (at protein level), heart, liver and adrenal gland and fetal heart, kidney, liver and lung. Expressed in presynaptic terminals of dopaminergic neurons projecting from the substantia nigra pars compacta to the striatum (at protein level). Expressed in axonal varicosities in dopaminergic nerve terminals (at protein level). Expressed in the putamen and in the adjacent cerebral cortex (at protein level). Expressed in colonic crypts (at protein level). Also expressed in colorectal cancers and malignant melanomas. Expressed in platelets. In terms of tissue distribution, highly expressed in the brain and heart.

It localises to the cytoplasm. The protein resides in the cell projection. The protein localises to the cilium. It is found in the flagellum. Its subcellular location is the cytoplasmic vesicle. It localises to the secretory vesicle. The protein resides in the axon. The protein localises to the dendrite. It is found in the perikaryon. Its subcellular location is the synapse. It localises to the mitochondrion. The protein resides in the nucleus. Filament-forming cytoskeletal GTPase. Pro-apoptotic protein involved in LGR5-positive intestinal stem cell and Paneth cell expansion in the intestines, via its interaction with XIAP. May also play a role in the regulation of cell fate in the intestine. Positive regulator of apoptosis involved in hematopoietic stem cell homeostasis; via its interaction with XIAP. Negative regulator of repair and hair follicle regeneration in response to injury, due to inhibition of hair follicle stem cell proliferation, potentially via its interaction with XIAP. Plays an important role in male fertility and sperm motility. During spermiogenesis, essential for the establishment of the annulus (a fibrous ring structure connecting the midpiece and the principal piece of the sperm flagellum) which is a requisite for the structural and mechanical integrity of the sperm. Involved in the migration of cortical neurons and the formation of neuron leading processes during embryonic development. Required for dopaminergic metabolism in presynaptic autoreceptors; potentially via activity as a presynaptic scaffold protein. Its function is as follows. Required for the induction of cell death mediated by TGF-beta and possibly by other apoptotic stimuli. Induces apoptosis through binding and inhibition of XIAP resulting in significant reduction in XIAP levels, leading to caspase activation and cell death. Mediates the interaction between BCL2 and XIAP, thereby positively regulating the ubiquitination and degradation of BCL2 and promoting apoptosis. The protein is Septin-4 of Homo sapiens (Human).